We begin with the raw amino-acid sequence, 346 residues long: Flap endonuclease 1 (346 aa).

The interval 1–100 is N-domain; that stretch reads MGVDIKELVE…KELERRYQIK (100 aa). Mg(2+)-binding residues include D29, D82, E154, E156, D175, D177, and D238. The interval 118–260 is I-domain; sequence EARIYAQQTS…KALKLVKELK (143 aa). The interval 336-344 is interaction with PCNA; the sequence is KQQSLESWF.

This sequence belongs to the XPG/RAD2 endonuclease family. FEN1 subfamily. As to quaternary structure, interacts with PCNA. PCNA stimulates the nuclease activity without altering cleavage specificity. Mg(2+) serves as cofactor.

Its function is as follows. Structure-specific nuclease with 5'-flap endonuclease and 5'-3' exonuclease activities involved in DNA replication and repair. During DNA replication, cleaves the 5'-overhanging flap structure that is generated by displacement synthesis when DNA polymerase encounters the 5'-end of a downstream Okazaki fragment. Binds the unpaired 3'-DNA end and kinks the DNA to facilitate 5' cleavage specificity. Cleaves one nucleotide into the double-stranded DNA from the junction in flap DNA, leaving a nick for ligation. Also involved in the base excision repair (BER) pathway. Acts as a genome stabilization factor that prevents flaps from equilibrating into structures that lead to duplications and deletions. Also possesses 5'-3' exonuclease activity on nicked or gapped double-stranded DNA. This chain is Flap endonuclease 1, found in Thermofilum pendens (strain DSM 2475 / Hrk 5).